The following is a 187-amino-acid chain: GTP cyclohydrolase 1 (187 aa).

Positions 76, 79, and 148 each coordinate Zn(2+).

This sequence belongs to the GTP cyclohydrolase I family. Toroid-shaped homodecamer, composed of two pentamers of five dimers.

It carries out the reaction GTP + H2O = 7,8-dihydroneopterin 3'-triphosphate + formate + H(+). It participates in cofactor biosynthesis; 7,8-dihydroneopterin triphosphate biosynthesis; 7,8-dihydroneopterin triphosphate from GTP: step 1/1. The chain is GTP cyclohydrolase 1 from Streptococcus suis (strain 98HAH33).